Here is a 208-residue protein sequence, read N- to C-terminus: Pyrrolidone-carboxylate peptidase (208 aa).

Catalysis depends on residues Glu-79, Cys-142, and His-166.

The protein belongs to the peptidase C15 family. As to quaternary structure, homotetramer made of two disulfide-linked dimers.

The protein localises to the cytoplasm. The catalysed reaction is Release of an N-terminal pyroglutamyl group from a polypeptide, the second amino acid generally not being Pro.. Its function is as follows. Removes 5-oxoproline from various penultimate amino acid residues except L-proline. In Pyrococcus furiosus (strain ATCC 43587 / DSM 3638 / JCM 8422 / Vc1), this protein is Pyrrolidone-carboxylate peptidase (pcp).